A 642-amino-acid polypeptide reads, in one-letter code: Uromodulin (642 aa).

Positions 1-24 (MGIPLTWMLLVMMVTSWFTLAEAS) are cleaved as a signal peptide. 2 N-linked (GlcNAc...) asparagine glycosylation sites follow: Asn-25 and Asn-38. The EGF-like 1 domain maps to 28–64 (EARRCSECHNNATCTVDGVVTTCSCQTGFTGDGLVCE). 21 disulfides stabilise this stretch: Cys-32-Cys-41, Cys-35-Cys-50, Cys-52-Cys-63, Cys-69-Cys-82, Cys-77-Cys-91, Cys-93-Cys-105, Cys-111-Cys-125, Cys-119-Cys-134, Cys-136-Cys-147, Cys-149-Cys-160, Cys-154-Cys-171, Cys-175-Cys-268, Cys-196-Cys-283, Cys-218-Cys-256, Cys-224-Cys-288, Cys-249-Cys-257, Cys-298-Cys-307, Cys-301-Cys-316, Cys-318-Cys-348, Cys-336-Cys-426, and Cys-367-Cys-390. Residues 65–106 (DMDECATPWTHNCSNSSCVNTPGSFKCSCQDGFRLTPELSCT) form the EGF-like 2; calcium-binding domain. Asn-76 and Asn-79 each carry an N-linked (GlcNAc...) asparagine glycan. The EGF-like 3; calcium-binding domain occupies 107 to 148 (DVDECSEQGLSNCHALATCVNTEGDYLCVCPEGFTGDGWYCE). The segment at 149–172 (CSPGSCEPGLDCLPQGPDGKLVCQ) is beta hairpin. Residues 173–292 (DPCNTYETLT…CNLAYCTDPS (120 aa)) form a D10C region. Residue Asn-233 is glycosylated (N-linked (GlcNAc...) asparagine). N-linked (GlcNAc...) asparagine glycosylation is present at Asn-276. Positions 293–324 (SVEGTCEECRVDEDCISDNGRWRCQCKQDSNI) constitute an EGF-like 4 domain. Asn-323 carries N-linked (GlcNAc...) asparagine glycosylation. Residues 335-430 (ECGANDIKMS…RMNFECSYPL (96 aa)) form a ZP-N region. The 256-residue stretch at 335 to 590 (ECGANDIKMS…PTCSGTRFRS (256 aa)) folds into the ZP domain. N-linked (GlcNAc...) asparagine glycosylation is found at Asn-397 and Asn-448. The segment at 431–454 (DMKVSLKTSLQPMVSALNISLGGT) is flexible ZP-N/ZP-C linker; important for secretion and polymerization into filaments. The segment at 455 to 465 (GKFTVRMALFQ) is internal hydrophobic patch (IHP). Positions 455–590 (GKFTVRMALF…PTCSGTRFRS (136 aa)) are ZP-C. Disulfide bonds link Cys-507/Cys-567, Cys-528/Cys-583, and Cys-572/Cys-579. The N-linked (GlcNAc...) asparagine glycan is linked to Asn-514. The segment at 587 to 590 (RFRS) is essential for cleavage by HPN. The tract at residues 599–607 (VLNLGPITR) is external hydrophobic patch (EHP); regulates polymerization into filaments. Ala-618 carries the GPI-anchor amidated alanine lipid modification. The propeptide at 619–642 (SSNLRLLSIWLLLFPSATLIFMVQ) is removed in mature form.

In terms of assembly, homodimer that then polymerizes into long filaments. The filaments can additionally assemble laterally to form a sheet. The filaments consist of a zigzag-shaped backbone with laterally protruding arms which interact with bacterial adhesin fimH. Two fimH molecules can bind to a single UMOD monomer. In terms of processing, N-glycosylated. Proteolytically cleaved at a conserved C-terminal proteolytic cleavage site to generate the secreted form found in urine. This cleavage is catalyzed by HPN. In terms of tissue distribution, detected in urine (secreted form). Detected in kidney thick ascending limb epithelial cells (at protein level).

The protein resides in the secreted. The protein localises to the apical cell membrane. It is found in the basolateral cell membrane. It localises to the cell projection. Its subcellular location is the cilium membrane. Its function is as follows. Functions in biogenesis and organization of the apical membrane of epithelial cells of the thick ascending limb of Henle's loop (TALH), where it promotes formation of complex filamentous gel-like structure that may play a role in the water barrier permeability. May serve as a receptor for binding and endocytosis of cytokines (IL-1, IL-2) and TNF. Facilitates neutrophil migration across renal epithelia. Functionally, in the urine, may contribute to colloid osmotic pressure, retards passage of positively charged electrolytes and inhibits formation of liquid containing supersaturated salts and subsequent formation of salt crystals. Protects against urinary tract infections by binding to type 1 fimbriated E.coli. Binds to the bacterial adhesin fimH which mediates the stable formation of bacterial aggregates, prevents the binding of E.coli to uroplakins UPK1A and UPK1B which act as urothelial receptors for type I fimbriae, and allows for pathogen clearance through micturation. Also promotes aggregation of other bacteria including K.pneumoniae, P.aeruginosa and S.mitis and so may also protect against other uropathogens. The sequence is that of Uromodulin (Umod) from Mus musculus (Mouse).